A 198-amino-acid polypeptide reads, in one-letter code: Protein GrpE (198 aa).

The protein belongs to the GrpE family. As to quaternary structure, homodimer.

The protein localises to the cytoplasm. Functionally, participates actively in the response to hyperosmotic and heat shock by preventing the aggregation of stress-denatured proteins, in association with DnaK and GrpE. It is the nucleotide exchange factor for DnaK and may function as a thermosensor. Unfolded proteins bind initially to DnaJ; upon interaction with the DnaJ-bound protein, DnaK hydrolyzes its bound ATP, resulting in the formation of a stable complex. GrpE releases ADP from DnaK; ATP binding to DnaK triggers the release of the substrate protein, thus completing the reaction cycle. Several rounds of ATP-dependent interactions between DnaJ, DnaK and GrpE are required for fully efficient folding. The protein is Protein GrpE of Actinobacillus pleuropneumoniae serotype 3 (strain JL03).